The following is a 218-amino-acid chain: Embryonic polyadenylate-binding protein 2-B (218 aa).

Disordered stretches follow at residues 1-24 (MSER…ELDD) and 169-218 (RTNM…NNPY). The 78-residue stretch at 93 to 170 (RSVYVGNVDY…RTIKVLPKRT (78 aa)) folds into the RRM domain. Residues 198-209 (QRPRGRPFRGRG) show a composition bias toward basic residues.

Homodimer; Upon poly(A) binding, undergoes a dimer-monomer transition that removes the polyproline motif from the RNA recognition site and allows it to be replaced by the adenosine nucleotides of poly(A).

It is found in the cytoplasm. Binds the poly(A) tail of mRNA. Unable to interact with the cap-binding complex and is therefore unlikely to be involved in translation initiation. This chain is Embryonic polyadenylate-binding protein 2-B (Pabpn1l-b), found in Xenopus laevis (African clawed frog).